Consider the following 49-residue polypeptide: Isoflavone reductase homolog 2 (49 aa).

5–11 (GGTGYIG) contacts NADP(+).

The protein belongs to the NmrA-type oxidoreductase family. Isoflavone reductase subfamily.

The protein localises to the cytoplasm. The sequence is that of Isoflavone reductase homolog 2 from Pseudotsuga menziesii (Douglas-fir).